A 214-amino-acid polypeptide reads, in one-letter code: Ribosomal RNA large subunit methyltransferase E (214 aa).

S-adenosyl-L-methionine-binding residues include Gly60, Trp62, Asp86, Asp102, and Asp127. Catalysis depends on Lys167, which acts as the Proton acceptor.

This sequence belongs to the class I-like SAM-binding methyltransferase superfamily. RNA methyltransferase RlmE family.

It is found in the cytoplasm. The enzyme catalyses uridine(2552) in 23S rRNA + S-adenosyl-L-methionine = 2'-O-methyluridine(2552) in 23S rRNA + S-adenosyl-L-homocysteine + H(+). Functionally, specifically methylates the uridine in position 2552 of 23S rRNA at the 2'-O position of the ribose in the fully assembled 50S ribosomal subunit. The protein is Ribosomal RNA large subunit methyltransferase E of Janthinobacterium sp. (strain Marseille) (Minibacterium massiliensis).